The following is a 374-amino-acid chain: Pulmonary surfactant-associated protein D (374 aa).

An N-terminal signal peptide occupies residues 1-19; that stretch reads MLHFLSMLVLLVQPLGDLG. An S-nitrosocysteine mark is found at Cys-34 and Cys-39. A disordered region spans residues 40–221; the sequence is SPTENGLPGR…RGIKGESGLP (182 aa). The region spanning 45–221 is the Collagen-like domain; that stretch reads GLPGRDGRDG…RGIKGESGLP (177 aa). Positions 49–64 are enriched in basic and acidic residues; the sequence is RDGRDGREGPRGEKGD. At Pro-77 the chain carries Hydroxyproline. Lys-86 is subject to 5-hydroxylysine. An N-linked (GlcNAc...) asparagine glycan is attached at Asn-89. Pro-95 carries the post-translational modification Hydroxyproline. The residue at position 98 (Lys-98) is a 5-hydroxylysine. Position 109 is a phosphoserine (Ser-109). Composition is skewed to low complexity over residues 137 to 163 and 170 to 200; these read KGEA…PAGP and PGEQ…RGPP. A hydroxyproline mark is found at Pro-170 and Pro-176. Residues 203-215 show a composition bias toward basic and acidic residues; it reads KGDRGAPGDRGIK. Positions 222 to 253 form a coiled coil; sequence DSAALRQQMEALNGKLQRLEAAFSRYKKAALF. Residues 259–374 form the C-type lectin domain; the sequence is VGDKIFRAAN…GEQRLVICEF (116 aa). Intrachain disulfides connect Cys-280/Cys-372 and Cys-350/Cys-364.

Belongs to the SFTPD family. Oligomeric complex of 4 set of homotrimers. S-nitrosylation at Cys-34 and Cys-39 alters the quaternary structure which results in a pro-inflammatory chemoattractive signaling activity with macrophages.

Its subcellular location is the secreted. The protein resides in the extracellular space. The protein localises to the extracellular matrix. It localises to the surface film. Contributes to the lung's defense against inhaled microorganisms, organic antigens and toxins. Interacts with compounds such as bacterial lipopolysaccharides, oligosaccharides and fatty acids and modulates leukocyte action in immune response. May participate in the extracellular reorganization or turnover of pulmonary surfactant. Binds strongly maltose residues and to a lesser extent other alpha-glucosyl moieties. The sequence is that of Pulmonary surfactant-associated protein D (Sftpd) from Rattus norvegicus (Rat).